A 261-amino-acid polypeptide reads, in one-letter code: NAD kinase (261 aa).

D54 functions as the Proton acceptor in the catalytic mechanism. NAD(+) is bound by residues 54–55, 123–124, R150, D152, and 163–168; these read DG, ND, and TAYSLS.

It belongs to the NAD kinase family. The cofactor is a divalent metal cation.

The protein resides in the cytoplasm. The enzyme catalyses NAD(+) + ATP = ADP + NADP(+) + H(+). Its function is as follows. Involved in the regulation of the intracellular balance of NAD and NADP, and is a key enzyme in the biosynthesis of NADP. Catalyzes specifically the phosphorylation on 2'-hydroxyl of the adenosine moiety of NAD to yield NADP. The protein is NAD kinase of Caldicellulosiruptor bescii (strain ATCC BAA-1888 / DSM 6725 / KCTC 15123 / Z-1320) (Anaerocellum thermophilum).